The following is a 486-amino-acid chain: UDP-N-acetylmuramate--L-alanine ligase (486 aa).

126–132 contributes to the ATP binding site; it reads GTHGKTS.

The protein belongs to the MurCDEF family.

The protein resides in the cytoplasm. The catalysed reaction is UDP-N-acetyl-alpha-D-muramate + L-alanine + ATP = UDP-N-acetyl-alpha-D-muramoyl-L-alanine + ADP + phosphate + H(+). Its pathway is cell wall biogenesis; peptidoglycan biosynthesis. Functionally, cell wall formation. This chain is UDP-N-acetylmuramate--L-alanine ligase, found in Corynebacterium glutamicum (strain ATCC 13032 / DSM 20300 / JCM 1318 / BCRC 11384 / CCUG 27702 / LMG 3730 / NBRC 12168 / NCIMB 10025 / NRRL B-2784 / 534).